The sequence spans 140 residues: MAKKVVAVVKLQCPAGKANPAPPVGPALGQHGVNIMAFCKQYNEATAAQAGLIIPVEITVYEDRSFTFVTKTPPAAVLLKKAAGIETASGTPNKKKVGKVSRAKVQEIAEMKMKDLNAASIEAAMRMIEGTARSMGIEIV.

The protein belongs to the universal ribosomal protein uL11 family. Part of the ribosomal stalk of the 50S ribosomal subunit. Interacts with L10 and the large rRNA to form the base of the stalk. L10 forms an elongated spine to which L12 dimers bind in a sequential fashion forming a multimeric L10(L12)X complex. Post-translationally, one or more lysine residues are methylated.

In terms of biological role, forms part of the ribosomal stalk which helps the ribosome interact with GTP-bound translation factors. The chain is Large ribosomal subunit protein uL11 from Heliobacterium modesticaldum (strain ATCC 51547 / Ice1).